The sequence spans 230 residues: Ribosomal RNA large subunit methyltransferase E (230 aa).

S-adenosyl-L-methionine contacts are provided by glycine 76, tryptophan 78, aspartate 99, aspartate 115, and aspartate 139. The Proton acceptor role is filled by lysine 179.

Belongs to the class I-like SAM-binding methyltransferase superfamily. RNA methyltransferase RlmE family.

The protein localises to the cytoplasm. The enzyme catalyses uridine(2552) in 23S rRNA + S-adenosyl-L-methionine = 2'-O-methyluridine(2552) in 23S rRNA + S-adenosyl-L-homocysteine + H(+). Specifically methylates the uridine in position 2552 of 23S rRNA at the 2'-O position of the ribose in the fully assembled 50S ribosomal subunit. This Nitrobacter winogradskyi (strain ATCC 25391 / DSM 10237 / CIP 104748 / NCIMB 11846 / Nb-255) protein is Ribosomal RNA large subunit methyltransferase E.